Here is a 299-residue protein sequence, read N- to C-terminus: Release factor glutamine methyltransferase (299 aa).

S-adenosyl-L-methionine-binding positions include 134–138 (GTGSG), Asp157, Trp186, and Asn203. 203–206 (NPPY) contacts substrate.

This sequence belongs to the protein N5-glutamine methyltransferase family. PrmC subfamily.

The enzyme catalyses L-glutaminyl-[peptide chain release factor] + S-adenosyl-L-methionine = N(5)-methyl-L-glutaminyl-[peptide chain release factor] + S-adenosyl-L-homocysteine + H(+). In terms of biological role, methylates the class 1 translation termination release factors RF1/PrfA and RF2/PrfB on the glutamine residue of the universally conserved GGQ motif. This is Release factor glutamine methyltransferase from Synechocystis sp. (strain ATCC 27184 / PCC 6803 / Kazusa).